Consider the following 535-residue polypeptide: Cytochrome P450 monooxygenase claP (535 aa).

A run of 2 helical transmembrane segments spans residues 7–27 (IGTL…KLVG) and 225–245 (YFSM…KLPT). Cys-472 lines the heme pocket.

Belongs to the cytochrome P450 family. Heme is required as a cofactor.

It is found in the membrane. It participates in secondary metabolite biosynthesis; terpenoid biosynthesis. In terms of biological role, cytochrome P450 monooxygenase; part of the gene cluster that mediates the biosynthesis of clavilactone A, a meroterpenoid that features a unique benzo-fused ten-membered carbocyclic ring unit with an alpha,beta-epoxy-gamma-lactone moiety, forming an intriguing 10/5/3 tricyclic nested skeleton. Cytochrome P450 monooxygenases claO, claP, claQ, claU, and claW are close orthologs, suggesting that a redundant function or pseudogenes are present in the cla cluster. These monoxygenases are not involved in clavilactone A biosynthesis nor its modification. ClaR, ClaS and ClaT are sufficient to produce clavilactone A. The biosynthesis begins with the prenyltransferase claS that transfers geranyl pyrophosphate (GPP) to hydroquinone to produces geranylhydroquinone. The cytochrome P450 monooxygenase claR then catalyzes the diradical coupling reaction between the intramolecular hydroquinone and allyl moieties to form the benzo-fused ten-membered carbocyclic ring unit of wigantol. Finally the cytochrome P450 monooxygenase claT exquisitely and stereoselectively assembles the alpha,beta-epoxy-gamma-lactone moiety, producing clavilactone A via arnebinol A. This Ampulloclitocybe clavipes (Club foot) protein is Cytochrome P450 monooxygenase claP.